Consider the following 443-residue polypeptide: Xaa-Pro dipeptidase (443 aa).

Residues D246, D257, H339, E384, and E423 each contribute to the Mn(2+) site.

This sequence belongs to the peptidase M24B family. Bacterial-type prolidase subfamily. The cofactor is Mn(2+).

It carries out the reaction Xaa-L-Pro dipeptide + H2O = an L-alpha-amino acid + L-proline. Splits dipeptides with a prolyl residue in the C-terminal position. The polypeptide is Xaa-Pro dipeptidase (Yersinia pestis bv. Antiqua (strain Nepal516)).